The chain runs to 325 residues: Undecaprenyl-phosphate 4-deoxy-4-formamido-L-arabinose transferase (325 aa).

2 helical membrane-spanning segments follow: residues 234–254 (LLSVIGSVIALMGFAFSLLLI) and 269–289 (VFMLFAVLFIFIGAQFVGMGL).

This sequence belongs to the glycosyltransferase 2 family.

Its subcellular location is the cell inner membrane. The catalysed reaction is UDP-4-deoxy-4-formamido-beta-L-arabinose + di-trans,octa-cis-undecaprenyl phosphate = 4-deoxy-4-formamido-alpha-L-arabinopyranosyl di-trans,octa-cis-undecaprenyl phosphate + UDP. The protein operates within glycolipid biosynthesis; 4-amino-4-deoxy-alpha-L-arabinose undecaprenyl phosphate biosynthesis; 4-amino-4-deoxy-alpha-L-arabinose undecaprenyl phosphate from UDP-4-deoxy-4-formamido-beta-L-arabinose and undecaprenyl phosphate: step 1/2. It functions in the pathway bacterial outer membrane biogenesis; lipopolysaccharide biosynthesis. Functionally, catalyzes the transfer of 4-deoxy-4-formamido-L-arabinose from UDP to undecaprenyl phosphate. The modified arabinose is attached to lipid A and is required for resistance to polymyxin and cationic antimicrobial peptides. This Erwinia tasmaniensis (strain DSM 17950 / CFBP 7177 / CIP 109463 / NCPPB 4357 / Et1/99) protein is Undecaprenyl-phosphate 4-deoxy-4-formamido-L-arabinose transferase.